Consider the following 390-residue polypeptide: Aspartate carbamoyltransferase, chloroplastic (390 aa).

Residues M1–R68 constitute a chloroplast transit peptide. Carbamoyl phosphate contacts are provided by R136 and T137. R136 and T137 together coordinate UMP. Residue K166 participates in L-aspartate binding. The carbamoyl phosphate site is built by R187, H215, and Q218. UMP-binding residues include R187 and H215. R248 and R310 together coordinate UMP. Positions 248 and 310 each coordinate L-aspartate. 2 residues coordinate carbamoyl phosphate: L350 and P351.

Belongs to the aspartate/ornithine carbamoyltransferase superfamily. ATCase family. In terms of assembly, homotrimer.

Its subcellular location is the plastid. It localises to the chloroplast. The enzyme catalyses carbamoyl phosphate + L-aspartate = N-carbamoyl-L-aspartate + phosphate + H(+). It participates in pyrimidine metabolism; UMP biosynthesis via de novo pathway; (S)-dihydroorotate from bicarbonate: step 2/3. With respect to regulation, feedback inhibited by UMP. In terms of biological role, catalyzes the condensation of carbamoyl phosphate and aspartate to form carbamoyl aspartate and inorganic phosphate, the committed step in the de novo pyrimidine nucleotide biosynthesis pathway. This Arabidopsis thaliana (Mouse-ear cress) protein is Aspartate carbamoyltransferase, chloroplastic (PYRB).